A 117-amino-acid polypeptide reads, in one-letter code: MDKKASRIRRATRARRKIAELGATRLVIHRTPRHVYAQVIAPNGSEVIAAASTVEKVIRESIANTGNKDAAAAVGKAIAERAIEKGISNVAFDRSGFQYHGRVAALAEAAREAGLKF.

This sequence belongs to the universal ribosomal protein uL18 family. Part of the 50S ribosomal subunit; part of the 5S rRNA/L5/L18/L25 subcomplex. Contacts the 5S and 23S rRNAs.

Its function is as follows. This is one of the proteins that bind and probably mediate the attachment of the 5S RNA into the large ribosomal subunit, where it forms part of the central protuberance. The polypeptide is Large ribosomal subunit protein uL18 (Photobacterium profundum (strain SS9)).